A 540-amino-acid chain; its full sequence is Phosphatidylinositol 4-phosphate 5-kinase type-1 beta (540 aa).

Residues 1 to 23 form a disordered region; sequence MSSVTENGDVTAGKPNEEKTYKK. Residues 25–395 form the PIPK domain; the sequence is TSSAIKGAIQ…RFLKFMNTRV (371 aa).

It localises to the cytoplasm. Its subcellular location is the cytosol. The protein resides in the cell membrane. It is found in the endomembrane system. It carries out the reaction a 1,2-diacyl-sn-glycero-3-phospho-(1D-myo-inositol 4-phosphate) + ATP = a 1,2-diacyl-sn-glycero-3-phospho-(1D-myo-inositol-4,5-bisphosphate) + ADP + H(+). It catalyses the reaction 1-octadecanoyl-2-(5Z,8Z,11Z,14Z)-eicosatetraenoyl-sn-glycero-3-phospho-1D-myo-inositol 4-phosphate + ATP = 1-octadecanoyl-2-(5Z,8Z,11Z,14Z)-eicosatetraenoyl-sn-glycero-3-phospho-1D-myo-inositol 4,5-bisphosphate + ADP + H(+). The catalysed reaction is 1-octadecanoyl-2-(9Z)-octadecenoyl-sn-glycero-3-phospho-1D-myo-inositol 4-phosphate + ATP = 1-octadecanoyl-2-(9Z)-octadecenoyl-sn-glycero-3-phospho-1D-myo-inositol 4,5-bisphosphate + ADP + H(+). The enzyme catalyses 1-octadecanoyl-2-(9Z)-octadecenoyl-sn-glycero-3-phospho-1D-myo-inositol + ATP = 1-octadecanoyl-2-(9Z)-octadecenoyl-sn-glycero-3-phospho-1D-myo-inositol 5-phosphate + ADP + H(+). It carries out the reaction 1-octadecanoyl-2-(9Z,12Z)-octadecadienoyl-sn-glycero-3-phospho-1D-myo-inositol + ATP = 1-octadecanoyl-2-(9Z,12Z)-octadecadienoyl-sn-glycero-3-phospho-1D-myo-inositol 5-phosphate + ADP + H(+). It catalyses the reaction 1-octadecanoyl-2-(5Z,8Z,11Z,14Z-eicosatetraenoyl)-sn-glycero-3-phospho-(1D-myo-inositol) + ATP = 1-octadecanoyl-2-(5Z,8Z,11Z,14Z)-eicosatetraenoyl-sn-glycero-3-phospho-1D-myo-inositol 5-phosphate + ADP + H(+). The catalysed reaction is 1,2-di-(9Z,12Z)-octadecadienoyl-sn-glycero-3-phospho-1D-myo-inositol + ATP = 1,2-di(9Z,12Z)-octadecadienoyl-sn-glycero-3-phospho-1D-myo-inositol 5-phosphate + ADP + H(+). Functionally, catalyzes the phosphorylation of phosphatidylinositol 4-phosphate (PtdIns(4)P/PI4P) to form phosphatidylinositol 4,5-bisphosphate (PtdIns(4,5)P2/PIP2), a lipid second messenger that regulates several cellular processes such as signal transduction, vesicle trafficking, actin cytoskeleton dynamics, cell adhesion, and cell motility. PtdIns(4,5)P2 can directly act as a second messenger or can be utilized as a precursor to generate other second messengers: inositol 1,4,5-trisphosphate (IP3), diacylglycerol (DAG) or phosphatidylinositol-3,4,5-trisphosphate (PtdIns(3,4,5)P3/PIP3). The sequence is that of Phosphatidylinositol 4-phosphate 5-kinase type-1 beta (PIP5K1B) from Gallus gallus (Chicken).